The primary structure comprises 131 residues: Leptin receptor gene-related protein (131 aa).

Helical transmembrane passes span 7 to 27, 32 to 52, 69 to 89, and 100 to 120; these read LVGL…GCAL, VYWP…HFIA, LAYF…IILA, and GLVL…FLVF.

Belongs to the OB-RGRP/VPS55 family.

It is found in the golgi apparatus membrane. Its subcellular location is the endosome membrane. Involved in protein trafficking. May be involved in the down-regulation of membrane protein levels. This is Leptin receptor gene-related protein (LEPROT) from Gallus gallus (Chicken).